A 125-amino-acid chain; its full sequence is Glycine cleavage system H protein (125 aa).

The Lipoyl-binding domain maps to 22–104 (SYVIGITDFA…YDTGWILKLE (83 aa)). Lysine 63 carries the post-translational modification N6-lipoyllysine.

This sequence belongs to the GcvH family. As to quaternary structure, the glycine cleavage system is composed of four proteins: P, T, L and H. It depends on (R)-lipoate as a cofactor.

The glycine cleavage system catalyzes the degradation of glycine. The H protein shuttles the methylamine group of glycine from the P protein to the T protein. In terms of biological role, is also involved in protein lipoylation via its role as an octanoyl/lipoyl carrier protein intermediate. The protein is Glycine cleavage system H protein of Listeria monocytogenes serotype 4a (strain HCC23).